The chain runs to 495 residues: Ectonucleoside triphosphate diphosphohydrolase 8 (495 aa).

The Cytoplasmic segment spans residues 1 to 8 (MGLSRKEQ). Residues 9-29 (VFLALLGASGVSGLTALILLL) form a helical membrane-spanning segment. Over 30–471 (VEATSVLLPT…AESYGVWVAK (442 aa)) the chain is Extracellular. N-linked (GlcNAc...) asparagine glycosylation occurs at N67. An intrachain disulfide couples C78 to C102. The Proton acceptor role is filled by E168. A disulfide bond links C246 and C292. N-linked (GlcNAc...) asparagine glycosylation is present at N304. Residues C329 and C335 are joined by a disulfide bond. N363 carries an N-linked (GlcNAc...) asparagine glycan. C381 and C403 are oxidised to a cystine. The helical transmembrane segment at 472 to 492 (VVFMVLALVAVVGAALVQLFW) threads the bilayer. Over 493-495 (LQD) the chain is Cytoplasmic.

It belongs to the GDA1/CD39 NTPase family. Ca(2+) serves as cofactor. Mg(2+) is required as a cofactor. Post-translationally, N-glycosylated.

The protein localises to the cell membrane. It catalyses the reaction a ribonucleoside 5'-triphosphate + 2 H2O = a ribonucleoside 5'-phosphate + 2 phosphate + 2 H(+). Not inhibited by ARL 67156. Canalicular ectonucleoside NTPDase responsible for the main hepatic NTPDase activity. Ectonucleoside NTPDases catalyze the hydrolysis of gamma- and beta-phosphate residues of nucleotides, playing a central role in concentration of extracellular nucleotides. Has activity toward ATP, ADP, UTP and UDP, but not toward AMP. The sequence is that of Ectonucleoside triphosphate diphosphohydrolase 8 (ENTPD8) from Homo sapiens (Human).